A 519-amino-acid chain; its full sequence is Baeyer-Villiger monooxygenase (519 aa).

Residues Glu41, 49–52 (TWRD), Asp61, Tyr67, and Val110 contribute to the FAD site. 59 to 61 (ACD) contacts NADP(+). NADP(+) is bound by residues 183–189 (TGASAIQ), 206–207 (RT), and 292–293 (KR). Met399 contacts FAD. Residues 499–519 (GAKAAEADTGADTGADAEVSA) form a disordered region.

This sequence belongs to the FAD-binding monooxygenase family. FAD serves as cofactor.

Catalyzes a Baeyer-Villiger oxidation reaction, i.e. the insertion of an oxygen atom into a carbon-carbon bond adjacent to a carbonyl, which converts ketones to esters or lactones using NADPH and/or NADH as an electron donor. Thus, can convert bicyclo[3.2.0]hept-2-en-6-one into the oxidative lactone products 2-oxabicyclo[3.3.0]oct-6-en-3-one and 3-oxabicyclo[3.3.0]oct-6-en-2-one. Is also able to catalyze the sulfoxidation of methyl phenyl sulfide (thioanisole). The protein is Baeyer-Villiger monooxygenase of Streptomyces coelicolor (strain ATCC BAA-471 / A3(2) / M145).